The following is a 311-amino-acid chain: Burkholderia TALE-like protein 3 (311 aa).

One copy of the Cryptic repeat -1 repeat lies at 19–50 (LSPFECLKIEKHSGGADALEFISNKYDALTQV). The Cryptic repeat 0 repeat unit spans residues 51–83 (LSRADILKIACHDCAAHALQAVLDYEQVFRQRG). Core repeat repeat units follow at residues 84–116 (FARADIIKITGNGGGAQALKAVVVHGPTLNECG), 117–149 (FSQADIVRIADNIGGAQALKAVLEHGPTLNERD), 150–182 (YSGADIVKIAGNGGGARALKAVVMHGPTLCESG), 183–215 (YSGADIVKIASNGGGAQALEAVAMHGSTLCERG), 216–248 (YCRTDIAKIAGNGGGAQALKAIVMHGPTLCERG), and 249–281 (YSRTDIVKIADNNGGAQALKAVFEHGPALTQAG). The stretch at 282 to 311 (RSNEDIVNMAARTGAAGQIRKMAAQLSGRQ) is one Cryptic repeat +1 repeat.

The protein belongs to the transcription activator-like effector (TALE) family. Bat subfamily.

Does not bind DNA, probably because it has too few core repeats. This chain is Burkholderia TALE-like protein 3, found in Mycetohabitans rhizoxinica (strain DSM 19002 / CIP 109453 / HKI 454) (Paraburkholderia rhizoxinica).